A 440-amino-acid polypeptide reads, in one-letter code: Glycerol-3-phosphate dehydrogenase [NAD(+)], chloroplastic (440 aa).

The N-terminal 47 residues, 1–47 (MAAAAAATFLPHTPTPRRRLAVAVHSPTRRRLSLVFSGPPDGALSVA), are a transit peptide targeting the chloroplast. A disordered region spans residues 57–76 (EEAAAAVSAPRGGGGGGGKE). NAD(+) is bound by residues 114 to 119 (GGGSFG), Phe-191, Lys-214, and Ala-248. Lys-214 is a binding site for substrate. Lys-299 (proton acceptor) is an active-site residue. NAD(+)-binding residues include Arg-363 and Glu-389. 363–364 (RN) serves as a coordination point for substrate.

It belongs to the NAD-dependent glycerol-3-phosphate dehydrogenase family.

The protein localises to the plastid. It localises to the chloroplast. The catalysed reaction is sn-glycerol 3-phosphate + NAD(+) = dihydroxyacetone phosphate + NADH + H(+). Its pathway is membrane lipid metabolism; glycerophospholipid metabolism. Required to supply glycerol-3-phosphate in the chloroplast for the synthesis of glycerolipids. The chain is Glycerol-3-phosphate dehydrogenase [NAD(+)], chloroplastic from Oryza sativa subsp. japonica (Rice).